A 421-amino-acid polypeptide reads, in one-letter code: Large ribosomal subunit protein uL4 (421 aa).

Ala2 is subject to N-acetylalanine. Lys14 bears the N6-acetyllysine mark. Omega-N-methylarginine is present on Arg97. At Lys106 the chain carries N6-acetyllysine. Lys239 is covalently cross-linked (Glycyl lysine isopeptide (Lys-Gly) (interchain with G-Cter in SUMO2)). Lys259 bears the N6-acetyllysine mark. Residue Thr266 is modified to Phosphothreonine. Phosphoserine is present on Ser290. Arg300 bears the Citrulline mark. Lys327 participates in a covalent cross-link: Glycyl lysine isopeptide (Lys-Gly) (interchain with G-Cter in SUMO2). Lys333 and Lys353 each carry N6-acetyllysine. Positions 359–421 are disordered; it reads EAKSEEKGVP…PTTEEKKPAA (63 aa). The residue at position 361 (Lys361) is an N6-acetyllysine; alternate. Lys361 is covalently cross-linked (Glycyl lysine isopeptide (Lys-Gly) (interchain with G-Cter in SUMO1); alternate). Ser362 is subject to Phosphoserine. Basic residues predominate over residues 368–391; the sequence is PGKKPRRKKGKKTVGVKKPKKPVV. The segment covering 401–421 has biased composition (basic and acidic residues); sequence PAADKKPAEKKPTTEEKKPAA.

It belongs to the universal ribosomal protein uL4 family. Component of the large ribosomal subunit. May bind IPO9 with low affinity. Interacts with RBM3. Post-translationally, citrullinated by PADI4.

The protein localises to the cytoplasm. Its function is as follows. Component of the large ribosomal subunit. The ribosome is a large ribonucleoprotein complex responsible for the synthesis of proteins in the cell. The chain is Large ribosomal subunit protein uL4 (RPL4) from Canis lupus familiaris (Dog).